The primary structure comprises 461 residues: 26S proteasome regulatory subunit 8 (461 aa).

185-192 (GPPGTGKT) provides a ligand contact to ATP.

Belongs to the AAA ATPase family.

The protein localises to the cytoplasm. The protein resides in the nucleus. The 26S proteasome is involved in the ATP-dependent degradation of ubiquitinated proteins. The regulatory (or ATPase) complex confers ATP dependency and substrate specificity to the 26S complex. The polypeptide is 26S proteasome regulatory subunit 8 (psmc5) (Xenopus laevis (African clawed frog)).